A 383-amino-acid polypeptide reads, in one-letter code: Izumo sperm-egg fusion protein 1 (383 aa).

The signal sequence occupies residues 1 to 21 (MGLHFTLLLAALANCLCPARL). 5 cysteine pairs are disulfide-bonded: C22–C149, C25–C152, C135–C159, C139–C165, and C182–C233. The Extracellular segment spans residues 22–306 (CIICDPFVVA…HRPEKKLKSR (285 aa)). The interval 148–160 (WCNKCEKQMHFCR) is important for interaction with IZUMO1R. The 85-residue stretch at 167-251 (ERQIEVHRLE…PATIIYYHVT (85 aa)) folds into the Ig-like C2-type domain. An N-linked (GlcNAc...) asparagine glycan is attached at N204. The chain crosses the membrane as a helical span at residues 307–327 (LLILLILGFVVLVASVIASVL). The Cytoplasmic segment spans residues 328-383 (HFRKTRVKSKNSNVENKTSAAEFKSEAESPQKMGSRKLSQAEFHTDSSDKVEEADN). The disordered stretch occupies residues 335 to 383 (KSKNSNVENKTSAAEFKSEAESPQKMGSRKLSQAEFHTDSSDKVEEADN). The segment covering 337–346 (KNSNVENKTS) has biased composition (polar residues). Phosphoserine occurs at positions 339, 346, and 366. Over residues 370–383 (FHTDSSDKVEEADN) the composition is skewed to basic and acidic residues. T372 is subject to Phosphothreonine.

Belongs to the Izumo family. In terms of assembly, monomer, homodimer; disulfide-linked and homooligomer; depending on the context. Interacts with IZUMO1R/JUNO. IZUMO1 and IZUMO1R/JUNO form a complex with 1:1 stoichiometry. In gamete recognition, IZUMO1R/JUNO first binds to monomeric IZUMO1. The weak, but specific interaction with IZUMO1R/JUNO induces IZUMO1 homodimerization. The process follows a tight binding phase where IZUMO1 bends the entire structure towards the sperm membrane side through a thiol-disulfide exchange reaction. The molecule no longer binds to IZUMO1R/JUNO and instead binds to a putative second oocyte receptor. Interacts with ACE3. Part of a oolemmal binding multimeric complex (IZUMO1 complex) composed at least of IZUMO1 and GLIPR1L1; the complex assemblage is influenced by the maturation status of the male germ cell. Interacts with GLIPR1L1. Interacts with FREY; the interaction retains IZUMO1 at the endoplasmic reticulum membrane and coordinates IZUMO1 complex assembly. Interacts with WDR54. Forms a complex with SPACA6 and TMEM81 on spermatocyte cell membrane. N-glycosylated. Glycosylation is not essential for fusion and for proper protein trafficking in sperm. Post-translationally, phosphorylated. The cytoplasmic C-terminus is phosphorylated and undergoes phosphorylation changes during epididymal transit. In terms of tissue distribution, expressed in sperm (at protein level).

The protein localises to the cell membrane. The protein resides in the cytoplasmic vesicle. It localises to the secretory vesicle. It is found in the acrosome membrane. In terms of biological role, essential sperm cell-surface protein required for fertilization by acting as a ligand for IZUMO1R/JUNO receptor on egg. The IZUMO1:IZUMO1R/JUNO interaction is a necessary adhesion event between sperm and egg that is required for fertilization but is not sufficient for cell fusion. The ligand-receptor interaction probably does not act as a membrane 'fusogen'. Plays a critical role in sperm-oolemma binding prior to plasma membrane fusion. Can mediate cell-cell fusion in cultured mammalian cells independently of its binding to IZUMO1R/JUNO. The protein is Izumo sperm-egg fusion protein 1 of Rattus norvegicus (Rat).